We begin with the raw amino-acid sequence, 111 residues long: Short neuropeptide F (111 aa).

A signal peptide spans 1–24; it reads MSAMYAKRCAALVLLVVTVGLVNA. Positions 25-76 are excised as a propeptide; sequence TENYMDYGEEMAEKTPAENIHELYRLLLQRNTLDNAGFGGIPLEHLMIRKSQ. Position 85 is a phenylalanine amide (phenylalanine 85). A propeptide spanning residues 88-111 is cleaved from the precursor; that stretch reads SGPHVSARALPRPMGAVAGYDDNN.

As to expression, expressed throughout the central nervous system (at protein level).

It is found in the secreted. Functionally, plays a role in controlling food intake and regulating body size. This Camponotus floridanus (Florida carpenter ant) protein is Short neuropeptide F.